Consider the following 187-residue polypeptide: LSM complex subunit LSM4 (187 aa).

A Sm domain is found at Leu-2–Ile-85. Positions Ile-93–Phe-187 are disordered. Over residues Asn-112–Asn-167 the composition is skewed to low complexity. Arg-119 is modified (omega-N-methylarginine). A compositionally biased stretch (polar residues) spans His-175–Phe-187. Ser-181 carries the phosphoserine modification.

Belongs to the snRNP Sm proteins family. As to quaternary structure, component of the heptameric LSM1-LSM7 complex that forms a seven-membered ring structure with a donut shape. The LSm subunits are arranged in the order LSM1, LSM2, LSM3, LSM6, LSM5, LSM7 and LSM4. Except for LSM1, where a C-terminal helix crosses the ring structure to form additional interactions with LSM3 and LSM6, each subunit interacts only with its two neighboring subunits. The LSM1-LSM7 complex interacts with PAT1; within the complex PAT1 has direct interactions with LSM2 and LSM3. The LSM1-LSM7 complex interacts with XRN1. Component of the heptameric LSM2-LSM8 complex that forms a seven-membered ring structure with a donut shape; an RNA strand can pass through the hole in the center of the ring structure. The LSm subunits are arranged in the order LSM8, LSM2, LSM3, LSM6, LSM5, LSM7 and LSM4. Component of the spliceosome U4/U6-U5 tri-snRNP complex composed of the U4, U6 and U5 snRNAs and at least PRP3, PRP4, PRP6, PRP8, PRP18, PRP31, PRP38, SNU13, SNU23, SNU66, SNU114, SPP381, SMB1, SMD1, SMD2, SMD3, SMX2, SMX3, LSM2, LSM3, LSM4, LSM5, LSM6, LSM7, LSM8, BRR2 and DIB1. May be found in a complex comprising LSM2-LSM7 without LSM1 or LSM8; the complex associates with pre-P RNA and snoRNA SNR5.

The protein localises to the nucleus. It localises to the cytoplasm. In terms of biological role, component of LSm protein complexes, which are involved in RNA processing and may function in a chaperone-like manner. Component of the cytoplasmic LSM1-LSM7 complex which is involved in mRNA degradation by activating the decapping step. Together with PAT1, the LSM1-LSM7 complex binds to osmotic stress-activated mRNAs to attenuate the osmotic stress response, probably by limiting ribosome access to the mRNA and consequently translation. Component of the nuclear LSM2-LSM8 complex, which is involved in spliceosome assembly. The LSM2-LSM8 complex plays a role in the biogenesis of the spliceosomal U4/U6-U5 tri-snRNP complex by accelerating PRP24-mediated annealing of U4/U6 di-snRNA. The LSM2-LSM8 complex binds U6 snRNA terminating with a non-cyclic 3' phosphate group. LSM2-LSM8 is probably also involved in degradation of nuclear pre-mRNA by targeting them for decapping. LSM2-LSM8 could be involved in processing of pre-tRNAs, pre-rRNAs and U3 snoRNA, although involvement may be indirect. In a complex that probably contains LSM2-LSM7, but not LSM1 or LSM8, associates with the precursor of the RNA component of RNase P (pre-P RNA) and may be involved in maturing pre-P RNA; the complex also associates with snoRNA SNR5. This Saccharomyces cerevisiae (strain ATCC 204508 / S288c) (Baker's yeast) protein is LSM complex subunit LSM4.